The primary structure comprises 154 residues: 6,7-dimethyl-8-ribityllumazine synthase (154 aa).

5-amino-6-(D-ribitylamino)uracil is bound by residues phenylalanine 22, 56 to 58, and 80 to 82; these read AFE and AVI. 85-86 is a (2S)-2-hydroxy-3-oxobutyl phosphate binding site; sequence AT. The active-site Proton donor is histidine 88. Phenylalanine 113 provides a ligand contact to 5-amino-6-(D-ribitylamino)uracil. Position 127 (arginine 127) interacts with (2S)-2-hydroxy-3-oxobutyl phosphate.

This sequence belongs to the DMRL synthase family. In terms of assembly, forms an icosahedral capsid composed of 60 subunits, arranged as a dodecamer of pentamers.

It catalyses the reaction (2S)-2-hydroxy-3-oxobutyl phosphate + 5-amino-6-(D-ribitylamino)uracil = 6,7-dimethyl-8-(1-D-ribityl)lumazine + phosphate + 2 H2O + H(+). Its pathway is cofactor biosynthesis; riboflavin biosynthesis; riboflavin from 2-hydroxy-3-oxobutyl phosphate and 5-amino-6-(D-ribitylamino)uracil: step 1/2. In terms of biological role, catalyzes the formation of 6,7-dimethyl-8-ribityllumazine by condensation of 5-amino-6-(D-ribitylamino)uracil with 3,4-dihydroxy-2-butanone 4-phosphate. This is the penultimate step in the biosynthesis of riboflavin. The protein is 6,7-dimethyl-8-ribityllumazine synthase of Anoxybacillus flavithermus (strain DSM 21510 / WK1).